Reading from the N-terminus, the 239-residue chain is Diablo IAP-binding mitochondrial protein (239 aa).

A mitochondrion-targeting transit peptide spans 1–22 (MAVLKSWLSRSVTLLFRYRQCL). An IAP-binding motif is present at residues 56–60 (AVPIA). The segment at 217–239 (RQKTQEEGEERAESEQEAYLRED) is disordered.

The protein belongs to the Smac/DIABLO protein family. In terms of assembly, homodimer. Interacts with BEX3. Interacts with BIRC2/c-IAP1 (via BIR3 domain). Interacts with BIRC6/BRUCE. Interacts with BIRC7/livin. Interacts with XIAP/BIRC4 (via BIR3 domain). Interacts with the monomeric and dimeric form of BIRC5/survivin. Interacts with AREL1 (via HECT domain); in the cytoplasm following induction of apoptosis. In terms of processing, ubiquitinated by BIRC7/livin. Ubiquitinated by BIRC6. Post-translationally, the precursor form is proteolytically cleaved by mitochondrial processing peptidase MPP to remove the transit peptide and produce an intermediate form. This is then processed by PARL to produce the mature cleaved form which is released from mitochondria into the cytosol in apoptotic cells.

It is found in the mitochondrion. The protein resides in the cytoplasm. Its subcellular location is the cytosol. Its function is as follows. Promotes apoptosis by activating caspases in the cytochrome c/Apaf-1/caspase-9 pathway. Acts by opposing the inhibitory activity of inhibitor of apoptosis proteins (IAP). Inhibits the activity of BIRC6/BRUCE by inhibiting its binding to caspases. This is Diablo IAP-binding mitochondrial protein from Pongo abelii (Sumatran orangutan).